The primary structure comprises 281 residues: Probable feruloyl esterase A (281 aa).

A signal peptide spans 1 to 21 (MKNFVSMHAILLACSAGAGLA). Disulfide bonds link cysteine 50-cysteine 279, cysteine 112-cysteine 115, and cysteine 248-cysteine 255. Aspartate 98 provides a ligand contact to substrate. Asparagine 100 is a glycosylation site (N-linked (GlcNAc...) asparagine). Residue tyrosine 101 coordinates substrate. The active-site Nucleophile is serine 154. N-linked (GlcNAc...) asparagine glycosylation is present at asparagine 173. Catalysis depends on aspartate 215, which acts as the Charge relay system. Substrate is bound at residue histidine 268. Histidine 268 (charge relay system) is an active-site residue.

It belongs to the AB hydrolase superfamily. FaeA family.

The protein resides in the secreted. The enzyme catalyses feruloyl-polysaccharide + H2O = ferulate + polysaccharide.. Its function is as follows. Involved in degradation of plant cell walls. Hydrolyzes the feruloyl-arabinose ester bond in arabinoxylans, and the feruloyl-galactose ester bond in pectin. This is Probable feruloyl esterase A (faeA) from Aspergillus flavus (strain ATCC 200026 / FGSC A1120 / IAM 13836 / NRRL 3357 / JCM 12722 / SRRC 167).